An 802-amino-acid chain; its full sequence is ATP-dependent zinc metalloprotease FTSH 7, chloroplastic (802 aa).

The transit peptide at 1 to 55 directs the protein to the chloroplast; it reads MTTTFEFLQPRIHGFATCCSSNSLLYSKASRFFNDRCRVYRQNPNRFVSNSITLP. The segment at 87–117 is disordered; the sequence is CQEDDQNESSSEEEESSQSTPAKSERKREKK. Acidic residues predominate over residues 88–102; the sequence is QEDDQNESSSEEEES. 2 consecutive transmembrane segments (helical) span residues 134 to 154 and 268 to 288; these read IIQA…MFVM and GGFF…AGLI. 365–372 lines the ATP pocket; sequence GLPGTGKT. Residue histidine 590 coordinates Zn(2+). The active site involves glutamate 591. Residues histidine 594 and aspartate 673 each coordinate Zn(2+).

In the N-terminal section; belongs to the AAA ATPase family. This sequence in the C-terminal section; belongs to the peptidase M41 family. Zn(2+) is required as a cofactor.

The protein resides in the plastid. The protein localises to the chloroplast thylakoid membrane. Probable ATP-dependent zinc metallopeptidase. The protein is ATP-dependent zinc metalloprotease FTSH 7, chloroplastic (FTSH7) of Arabidopsis thaliana (Mouse-ear cress).